A 310-amino-acid polypeptide reads, in one-letter code: Putative S-adenosyl-L-methionine-dependent methyltransferase MMAR_0357 (310 aa).

Residues Asp-132 and 161–162 contribute to the S-adenosyl-L-methionine site; that span reads DL.

The protein belongs to the UPF0677 family.

Functionally, exhibits S-adenosyl-L-methionine-dependent methyltransferase activity. The chain is Putative S-adenosyl-L-methionine-dependent methyltransferase MMAR_0357 from Mycobacterium marinum (strain ATCC BAA-535 / M).